Consider the following 146-residue polypeptide: Putative pre-16S rRNA nuclease (146 aa).

Belongs to the YqgF nuclease family.

It localises to the cytoplasm. Could be a nuclease involved in processing of the 5'-end of pre-16S rRNA. The polypeptide is Putative pre-16S rRNA nuclease (Dechloromonas aromatica (strain RCB)).